A 129-amino-acid polypeptide reads, in one-letter code: Photosystem II extrinsic protein V (129 aa).

4 residues coordinate heme c: Cys-35, Cys-38, His-39, and His-90.

The protein belongs to the cytochrome c family. PsbV subfamily. PSII is composed of 1 copy each of membrane proteins PsbA, PsbB, PsbC, PsbD, PsbE, PsbF, PsbH, PsbI, PsbJ, PsbK, PsbL, PsbM, PsbT, PsbX, PsbY, PsbZ, Psb30/Ycf12, peripheral proteins PsbO, CyanoQ (PsbQ), PsbU, PsbV and a large number of cofactors. It forms dimeric complexes. Homodimer in crystal structure. Requires heme c as cofactor.

The protein localises to the cellular thylakoid membrane. Functionally, one of the extrinsic, lumenal subunits of photosystem II (PSII). PSII is a light-driven water plastoquinone oxidoreductase, using light energy to abstract electrons from H(2)O, generating a proton gradient subsequently used for ATP formation. The extrinsic proteins stabilize the structure of photosystem II oxygen-evolving complex (OEC), the ion environment of oxygen evolution and protect the OEC against heat-induced inactivation. Low-potential cytochrome c that plays a role in the OEC of PSII. This chain is Photosystem II extrinsic protein V, found in Limnospira maxima (Arthrospira maxima).